A 432-amino-acid polypeptide reads, in one-letter code: EF-hand calcium-binding domain-containing protein 3 (432 aa).

EF-hand domains follow at residues 45-80 and 81-116; these read AQLE…LGMN and LNTY…KKLF. Ca(2+) is bound by residues D94, D96, D98, K100, and D105. Y273 carries the phosphotyrosine modification. The disordered stretch occupies residues 394–432; sequence SMNKSSPSNSGLSSPSDFSESDPETGRKRKRKSSRGFRQ. Positions 395-411 are enriched in low complexity; the sequence is MNKSSPSNSGLSSPSDF. Residues 420–432 are compositionally biased toward basic residues; that stretch reads RKRKRKSSRGFRQ.

The chain is EF-hand calcium-binding domain-containing protein 3 (Efcab3) from Mus musculus (Mouse).